Consider the following 182-residue polypeptide: Transcription termination/antitermination protein NusG (182 aa).

Residues 131–163 enclose the KOW domain; it reads VGEQVRIKSGPFANQVGEVQEIEADKFKLTVLV.

This sequence belongs to the NusG family.

Participates in transcription elongation, termination and antitermination. In Staphylococcus carnosus (strain TM300), this protein is Transcription termination/antitermination protein NusG.